The chain runs to 293 residues: Short-chain dehydrogenase/reductase PhomF (293 aa).

NADP(+) contacts are provided by Ile31 and Asn102. The active-site Proton donor is the Ser175. Residues Tyr190, Lys194, and Ser225 each coordinate NADP(+). Tyr190 serves as the catalytic Proton acceptor. Residue Lys194 is the Lowers pKa of active site Tyr of the active site.

The protein belongs to the short-chain dehydrogenases/reductases (SDR) family.

In terms of biological role, short-chain dehydrogenase/reductase; part of the gene cluster that mediates the biosynthesis of the phomopsins, a group of hexapeptide mycotoxins which infects lupins and causes lupinosis disease in livestock. The role of phomF within the phomopsins biosynthesis pathway has still to be determined. The pathway starts with the processing of the precursor phomA by several endopeptidases including kexin proteases as well as the cluster-specific S41 family peptidase phomP1 and the oligopeptidase phomG to produce 10 identical copies of the hexapeptide Tyr-Val-Ile-Pro-Ile-Asp. After being excised from the precursor peptide, the core peptides are cyclized and modified post-translationally by enzymes encoded within the gene cluster. The timing and order of proteolysis of the phomA precursor and PTMs are still unknown. Two tyrosinase-like enzymes, phomQ1 and phomQ2, catalyze the chlorination and hydroxylation of Tyr, respectively. PhomYb, is proposed to be involved in the construction of the macrocyclic structure. The other 4 ustYa family proteins may be involved in PTMs that generate the unique structure of phomopsin A. PhomYa is required for the hydroxylation of C-beta of Tyr. PhomYc, phomYd, and phomYe are responsible for the biosynthesis of 2,3-dehydroisoleucine (dIle), 2,3-dehydroaspartic acid (dAsp), and 3,4-dehydroproline (dPro), respectively. While dIle formation by phomYc is indispensable for the installation of dAsp by phomYd, the order of the other PTMs have not been elucidated yet. Most of the biosynthetic enzymes likely have broad substrate specificity, and thus, there might be a metabolic grid from a precursor to phomopsin A. The enzyme(s) responsible for the biosynthesis of 3,4-dehydrovaline (dVal) have also not been identified yet. Finally, phomM acts as an S-adenosylmethionine-dependent alpha-N-methyltransferase that catalyzes two successive N-methylation reactions, converting N-desmethyl-phomopsin A to phomopsin A and phomopsin A further to an N,N-dimethylated congener called phomopsin E. In Diaporthe leptostromiformis (Lupinosis disease fungus), this protein is Short-chain dehydrogenase/reductase PhomF.